We begin with the raw amino-acid sequence, 342 residues long: UDP-N-acetylglucosamine--N-acetylmuramyl-(pentapeptide) pyrophosphoryl-undecaprenol N-acetylglucosamine transferase (342 aa).

Residues 10-12, asparagine 124, serine 177, and glutamine 275 contribute to the UDP-N-acetyl-alpha-D-glucosamine site; that span reads TGG.

Belongs to the glycosyltransferase 28 family. MurG subfamily.

Its subcellular location is the cell inner membrane. It carries out the reaction di-trans,octa-cis-undecaprenyl diphospho-N-acetyl-alpha-D-muramoyl-L-alanyl-D-glutamyl-meso-2,6-diaminopimeloyl-D-alanyl-D-alanine + UDP-N-acetyl-alpha-D-glucosamine = di-trans,octa-cis-undecaprenyl diphospho-[N-acetyl-alpha-D-glucosaminyl-(1-&gt;4)]-N-acetyl-alpha-D-muramoyl-L-alanyl-D-glutamyl-meso-2,6-diaminopimeloyl-D-alanyl-D-alanine + UDP + H(+). The protein operates within cell wall biogenesis; peptidoglycan biosynthesis. Cell wall formation. Catalyzes the transfer of a GlcNAc subunit on undecaprenyl-pyrophosphoryl-MurNAc-pentapeptide (lipid intermediate I) to form undecaprenyl-pyrophosphoryl-MurNAc-(pentapeptide)GlcNAc (lipid intermediate II). The polypeptide is UDP-N-acetylglucosamine--N-acetylmuramyl-(pentapeptide) pyrophosphoryl-undecaprenol N-acetylglucosamine transferase (Campylobacter jejuni subsp. jejuni serotype O:6 (strain 81116 / NCTC 11828)).